The primary structure comprises 147 residues: Large ribosomal subunit protein uL13 (147 aa).

It belongs to the universal ribosomal protein uL13 family. Part of the 50S ribosomal subunit.

In terms of biological role, this protein is one of the early assembly proteins of the 50S ribosomal subunit, although it is not seen to bind rRNA by itself. It is important during the early stages of 50S assembly. The polypeptide is Large ribosomal subunit protein uL13 (Mycobacterium leprae (strain Br4923)).